The following is a 405-amino-acid chain: MKTPRRFPLIALTVAAVLTAAALYWWYSHSTASTVQNRQGTEQQRASNSQGSAKRAGNAPPVQAAEALRQNVPQYLSGLGTVTAANTVTLRSRVDGDLVALHFNEGQEVAAGQLLAEIDPRPYEVALMQAEGQLAKDRATLTNARRDLARYEKLAQTQLVSAQELDTQRARVSETLGTIKADEGSVASARLNLTYSRVTAPIAGRVGLKQVDVGNYVSSGDANGIVVIAQTHPIDLVFSLPESDIASVLSAQKNGKLPVEAWDRNNKNLLTRGTLLSMDNQIDSTTGTVKLKARFDNQDDRLFPNQFVNARLKIGTLEDAIVIPAAALQMGNESHFVWVINGDSTVSKKIVASGLQGSGQVVISAGLQAGEKVVTDGIDRLTDGAQTEIVPAQASTPLPASGASS.

Residues 1–22 (MKTPRRFPLIALTVAAVLTAAA) form the signal peptide. Polar residues predominate over residues 35–52 (VQNRQGTEQQRASNSQGS). The tract at residues 35–62 (VQNRQGTEQQRASNSQGSAKRAGNAPPV) is disordered.

It belongs to the membrane fusion protein (MFP) (TC 8.A.1) family. In terms of assembly, part of a tripartite efflux system composed of MdtA, MdtB and MdtC.

It is found in the cell inner membrane. The protein is Multidrug resistance protein MdtA of Erwinia amylovora (strain ATCC 49946 / CCPPB 0273 / Ea273 / 27-3).